The primary structure comprises 505 residues: MGRTRKANVCPRLSRRALGFYTRDAGVVQRTNLGILRALVCQESTKFKNVWTTHSKSPIAYERGRIYFDNYRCCVSSVASEPRKLYEMPKCSKSEKIEDALLWECPVGEILPDPSDYKSSLIALTAHNWLLRISATTGEILEKIYLASYCKFRYLSWDTPQEVIAVKSAQNKGSAAARQAGTQPPVLLYLAVFRVLPFSLVGILEINRKVFENVTDATLSHGILIVMYSSGLVRLYSFQAIIEQFMQQKLDLGCACSQGGTTGTVGEAPFGIPCNVKITDSPPPLFEVSSLENAFQIGGHPWHYIITPNKKKQKGVFHICALKDNSLAKNGIQEMECCSLESDWIYFHPDASGRIIHVGPNQVKVLKLSEVENNSSQHQISEDFVIWANREDRKENLITVTASGRVVKRNVNLLDDDPEQETFKVVDYEDELNLLSVVAVTQIDAEGKAHLDFHCNEYGTLLKSIPLVESWDVVCITTGTLSCKGFLYKRHLLGHVLVSPDSPVP.

2 consecutive transmembrane segments (helical) span residues 186-206 and 222-242; these read VLLY…ILEI and GILI…QAII.

As to quaternary structure, interacts with DDB1, CUL4A and CUL4B.

Its subcellular location is the membrane. The protein localises to the nucleus. The protein resides in the nucleolus. It functions in the pathway protein modification; protein ubiquitination. May function as a substrate receptor for CUL4-DDB1 E3 ubiquitin-protein ligase complex. The chain is DDB1- and CUL4-associated factor 17 (Dcaf17) from Rattus norvegicus (Rat).